A 291-amino-acid polypeptide reads, in one-letter code: Phosphatidylglycerol--prolipoprotein diacylglyceryl transferase (291 aa).

A run of 7 helical transmembrane segments spans residues Val-21–Ala-41, Leu-60–Tyr-80, Trp-96–Phe-116, Phe-130–Gly-150, Ser-198–Ile-218, Gly-225–Phe-245, and Ile-260–Trp-280. Arg-143 serves as a coordination point for a 1,2-diacyl-sn-glycero-3-phospho-(1'-sn-glycerol).

This sequence belongs to the Lgt family.

It is found in the cell inner membrane. The catalysed reaction is L-cysteinyl-[prolipoprotein] + a 1,2-diacyl-sn-glycero-3-phospho-(1'-sn-glycerol) = an S-1,2-diacyl-sn-glyceryl-L-cysteinyl-[prolipoprotein] + sn-glycerol 1-phosphate + H(+). The protein operates within protein modification; lipoprotein biosynthesis (diacylglyceryl transfer). In terms of biological role, catalyzes the transfer of the diacylglyceryl group from phosphatidylglycerol to the sulfhydryl group of the N-terminal cysteine of a prolipoprotein, the first step in the formation of mature lipoproteins. This Salmonella newport (strain SL254) protein is Phosphatidylglycerol--prolipoprotein diacylglyceryl transferase.